A 98-amino-acid polypeptide reads, in one-letter code: Large ribosomal subunit protein uL23 (98 aa).

The protein belongs to the universal ribosomal protein uL23 family. In terms of assembly, part of the 50S ribosomal subunit. Contacts protein L29, and trigger factor when it is bound to the ribosome.

Functionally, one of the early assembly proteins it binds 23S rRNA. One of the proteins that surrounds the polypeptide exit tunnel on the outside of the ribosome. Forms the main docking site for trigger factor binding to the ribosome. This Borreliella afzelii (strain PKo) (Borrelia afzelii) protein is Large ribosomal subunit protein uL23.